Here is a 439-residue protein sequence, read N- to C-terminus: (p)ppApp synthetase toxin Tas1 (439 aa).

The protein resides in the secreted. It carries out the reaction AMP + ATP = adenosine 3'-diphosphate,5'-phosphate + AMP + H(+). The enzyme catalyses ADP + ATP = adenosine 3'-diphosphate,5'-diphosphate + AMP. It catalyses the reaction 2 ATP = adenosine 3'-diphosphate,5'-triphosphate + AMP. Type VI secretion exported toxin that pyrophosphorylates adenosine nucleotides to produce (p)ppApp. Thereby, depletes cellular ADP and ATP to dysregulate central metabolism in competitor cells. The sequence is that of (p)ppApp synthetase toxin Tas1 (tas1) from Pseudomonas aeruginosa (strain UCBPP-PA14).